Consider the following 199-residue polypeptide: Probable molybdenum cofactor guanylyltransferase (199 aa).

GTP contacts are provided by residues 9–11 (LAG), Lys21, Asp69, and Asp100. Residue Asp100 participates in Mg(2+) binding.

The protein belongs to the MobA family. Mg(2+) serves as cofactor.

The protein localises to the cytoplasm. It carries out the reaction Mo-molybdopterin + GTP + H(+) = Mo-molybdopterin guanine dinucleotide + diphosphate. Transfers a GMP moiety from GTP to Mo-molybdopterin (Mo-MPT) cofactor (Moco or molybdenum cofactor) to form Mo-molybdopterin guanine dinucleotide (Mo-MGD) cofactor. The sequence is that of Probable molybdenum cofactor guanylyltransferase from Bacillus cytotoxicus (strain DSM 22905 / CIP 110041 / 391-98 / NVH 391-98).